Consider the following 323-residue polypeptide: Methionyl-tRNA formyltransferase (323 aa).

Residue 117–120 (SLLP) participates in (6S)-5,6,7,8-tetrahydrofolate binding.

Belongs to the Fmt family.

It carries out the reaction L-methionyl-tRNA(fMet) + (6R)-10-formyltetrahydrofolate = N-formyl-L-methionyl-tRNA(fMet) + (6S)-5,6,7,8-tetrahydrofolate + H(+). Its function is as follows. Attaches a formyl group to the free amino group of methionyl-tRNA(fMet). The formyl group appears to play a dual role in the initiator identity of N-formylmethionyl-tRNA by promoting its recognition by IF2 and preventing the misappropriation of this tRNA by the elongation apparatus. The protein is Methionyl-tRNA formyltransferase of Acidovorax ebreus (strain TPSY) (Diaphorobacter sp. (strain TPSY)).